The primary structure comprises 123 residues: Small ribosomal subunit protein uS11 (123 aa).

The tract at residues 1–22 (MAKKRKKKLSSPEGISHIHASA) is disordered.

Belongs to the universal ribosomal protein uS11 family. As to quaternary structure, part of the 30S ribosomal subunit. Interacts with proteins S7 and S18. Binds to IF-3.

Functionally, located on the platform of the 30S subunit, it bridges several disparate RNA helices of the 16S rRNA. Forms part of the Shine-Dalgarno cleft in the 70S ribosome. The polypeptide is Small ribosomal subunit protein uS11 (Malacoplasma penetrans (strain HF-2) (Mycoplasma penetrans)).